A 363-amino-acid chain; its full sequence is Pyrimidine monooxygenase RutA (363 aa).

FMN-binding positions include 49–50 (IK), Asn115, Glu124, 140–141 (RY), and Ser190.

The protein belongs to the NtaA/SnaA/DszA monooxygenase family. RutA subfamily.

The catalysed reaction is uracil + FMNH2 + NADH + O2 = (Z)-3-ureidoacrylate + FMN + NAD(+) + H2O + H(+). It carries out the reaction thymine + FMNH2 + NADH + O2 = (Z)-2-methylureidoacrylate + FMN + NAD(+) + H2O + H(+). Catalyzes the pyrimidine ring opening between N-3 and C-4 by an unusual flavin hydroperoxide-catalyzed mechanism, adding oxygen atoms in the process to yield ureidoacrylate peracid, that immediately reacts with FMN forming ureidoacrylate and FMN-N(5)-oxide. The FMN-N(5)-oxide reacts spontaneously with NADH to produce FMN. Requires the flavin reductase RutF to regenerate FMN in vivo. The protein is Pyrimidine monooxygenase RutA of Rhizobium rhizogenes (strain K84 / ATCC BAA-868) (Agrobacterium radiobacter).